A 264-amino-acid chain; its full sequence is ATP synthase subunit a (264 aa).

Transmembrane regions (helical) follow at residues 29-49, 89-109, 134-154, 177-197, 208-228, and 235-255; these read TWHI…LWLF, VIAP…FMDM, DLNI…YYSI, IPVN…SLAL, LIFI…TLGV, and LIFH…LTIV.

Belongs to the ATPase A chain family. As to quaternary structure, F-type ATPases have 2 components, CF(1) - the catalytic core - and CF(0) - the membrane proton channel. CF(1) has five subunits: alpha(3), beta(3), gamma(1), delta(1), epsilon(1). CF(0) has three main subunits: a(1), b(2) and c(9-12). The alpha and beta chains form an alternating ring which encloses part of the gamma chain. CF(1) is attached to CF(0) by a central stalk formed by the gamma and epsilon chains, while a peripheral stalk is formed by the delta and b chains.

Its subcellular location is the cell inner membrane. Functionally, key component of the proton channel; it plays a direct role in the translocation of protons across the membrane. This is ATP synthase subunit a from Shewanella woodyi (strain ATCC 51908 / MS32).